The chain runs to 115 residues: U3-lycotoxin-Ls1j (115 aa).

Positions 1 to 20 (MKFVLLFGVFLVTLFSYSSA) are cleaved as a signal peptide. The propeptide occupies 21–44 (EMLDDFDQADEDELLSLIEKEEAR). Cystine bridges form between Cys-48-Cys-63, Cys-55-Cys-72, Cys-62-Cys-87, and Cys-74-Cys-85.

This sequence belongs to the neurotoxin 19 (CSTX) family. 01 subfamily. Expressed by the venom gland.

The protein resides in the secreted. The sequence is that of U3-lycotoxin-Ls1j from Lycosa singoriensis (Wolf spider).